A 368-amino-acid chain; its full sequence is D-alanine--D-alanine ligase (368 aa).

In terms of domain architecture, ATP-grasp spans 141–350; that stretch reads KMIWDYSGLP…YNELIMHLIE (210 aa). 176–231 is a binding site for ATP; that stretch reads EKDLEYPLFIKPCRAGSSVGAGMVKNRNELLEQAEESFLWDNKILVEACIEAREVE. Aspartate 303, glutamate 317, and asparagine 319 together coordinate Mg(2+).

The protein belongs to the D-alanine--D-alanine ligase family. It depends on Mg(2+) as a cofactor. Mn(2+) is required as a cofactor.

It localises to the cytoplasm. The catalysed reaction is 2 D-alanine + ATP = D-alanyl-D-alanine + ADP + phosphate + H(+). The protein operates within cell wall biogenesis; peptidoglycan biosynthesis. Cell wall formation. This chain is D-alanine--D-alanine ligase, found in Treponema denticola (strain ATCC 35405 / DSM 14222 / CIP 103919 / JCM 8153 / KCTC 15104).